The sequence spans 430 residues: MFVDQVKISLKAGDGGNGITAYRREKYVPFGGPAGGDGGIGASVVFEVDEGLRTLLDFRYQRHFKAKKGENGQSSNMHGRNAEDLVLKVPPGTIIKSVESEEVLADLVEDGQRAIVARGGRGGRGNSRFATPRNPAPDFSENGEPGEELEVTLELKLLADVGLVGFPSVGKSTLLSIVSKAKPKIGAYHFTTIKPNLGVVSTPDHRSFVMADLPGLIEGASDGVGLGHQFLRHVERTKVIVHMIDMSGSEGRNPLDDYKIINQELINYKQRLEDRPQIIVANKMDLPDSQGNLSHFKEQLDNDVTVVPVSTITRDNIDQLLYQIADKLEEVKDVDFSVEEDENLGVNRVLYKHTPSADKFTISRDDDGAYVVSGNAIERMFKMTDFNSDPAVRRFARQMRSMGIDDALRERGCSNGDIVRILGGEFEFVE.

Positions Met1–Leu158 constitute an Obg domain. The segment at Arg118–Pro145 is disordered. Positions Ala159 to Glu329 constitute an OBG-type G domain. GTP contacts are provided by residues Gly165–Ser172, Phe190–Lys194, Asp212–Gly215, Asn282–Asp285, and Ser310–Ile312. 2 residues coordinate Mg(2+): Ser172 and Thr192. In terms of domain architecture, OCT spans Lys352 to Glu430.

The protein belongs to the TRAFAC class OBG-HflX-like GTPase superfamily. OBG GTPase family. As to quaternary structure, monomer. Mg(2+) is required as a cofactor.

It is found in the cytoplasm. In terms of biological role, an essential GTPase which binds GTP, GDP and possibly (p)ppGpp with moderate affinity, with high nucleotide exchange rates and a fairly low GTP hydrolysis rate. Plays a role in control of the cell cycle, stress response, ribosome biogenesis and in those bacteria that undergo differentiation, in morphogenesis control. The protein is GTPase Obg of Staphylococcus epidermidis (strain ATCC 35984 / DSM 28319 / BCRC 17069 / CCUG 31568 / BM 3577 / RP62A).